The chain runs to 397 residues: Acylalkylpyrone synthase csyB (397 aa).

CoA-binding positions include K50 and 50 to 57 (KMLEINRK). C155 functions as the Nucleophile in the catalytic mechanism. Substrate is bound at residue 214–215 (GD). Residues I267, G312, 312–315 (GGYA), Y314, and A315 each bind CoA. Residue H377 is part of the active site.

It belongs to the thiolase-like superfamily. Chalcone/stilbene synthases family. In terms of assembly, homodimer.

Functionally, acylalkylpyrone synthase that catalyzes not only the polyketide chain elongation but also the one-pot condensation of two beta-ketoacyl units to produce the 3-acyl-4-hydroxy-6-alkyl-alpha-pyrone (AcAP) scaffold, a precursor of csypyrone B. The enzyme reaction is initiated by the loading of acetoacetyl-CoA onto Cys-155, and subsequent thioester bond cleavage by the nucleophilic water generates the beta-keto acid intermediate, which is placed within a pocket. The second beta-ketoacyl unit is then produced by polyketide chain elongation of fatty acyl-CoA with one molecule of malonyl-CoA, and the condensation with the beta-ketoacid generates the final products. Csypyrone B1 is the major product and contains a propanoic acid side-chain, whereas csypyrones B2 and B3 are minor compounds that contain butyric or pentanoic acid side-chains, respectively. In Aspergillus oryzae (strain ATCC 42149 / RIB 40) (Yellow koji mold), this protein is Acylalkylpyrone synthase csyB.